We begin with the raw amino-acid sequence, 370 residues long: MVGKLKQNLLLACLVISSVTVFYLGQHAMECHHRIEERSQPVKLESTRTTVRTGLDLKANKTFAYHKDMPLIFIGGVPRSGTTLMRAMLDAHPDIRCGEETRVIPRILALKQMWSRSSKEKIRLDEAGVTDEVLDSAMQAFLLEIIVKHGEPAPYLCNKDPFALKSLTYLSRLFPNAKFLLMVRDGRASVHSMISRKVTIAGFDLNSYRDCLTKWNRAIETMYNQCMEVGYKKCMLVHYEQLVLHPERWMRTLLKFLQIPWNHSVLHHEEMIGKAGGVSLSKVERSTDQVIKPVNVGALSKWVGKIPPDVLQDMAVIAPMLAKLGYDPYANPPNYGKPDPKIIENTRRVYKGEFQLPDFLKEKPQTEQVE.

Residues 1-8 (MVGKLKQN) lie on the Cytoplasmic side of the membrane. The chain crosses the membrane as a helical; Signal-anchor for type II membrane protein span at residues 9-25 (LLLACLVISSVTVFYLG). The Lumenal segment spans residues 26–370 (QHAMECHHRI…KEKPQTEQVE (345 aa)). Asparagine 60 is a glycosylation site (N-linked (GlcNAc...) asparagine). Residue 79-83 (RSGTT) participates in 3'-phosphoadenylyl sulfate binding. Cysteine 97 and cysteine 157 form a disulfide bridge. Glutamate 100 (proton donor/acceptor) is an active-site residue. The segment at 102–106 (RVIPR) is interaction with peptide substrate. Positions 184, 192, and 196 each coordinate 3'-phosphoadenylyl sulfate. Cysteine 226 and cysteine 234 are oxidised to a cystine. Tyrosine 239 lines the 3'-phosphoadenylyl sulfate pocket. N-linked (GlcNAc...) asparagine glycosylation occurs at asparagine 262. 3'-phosphoadenylyl sulfate-binding positions include 286–295 (STDQVIKPVN) and lysine 301.

This sequence belongs to the protein sulfotransferase family. Homodimer. Can also form heterodimers with TPST2. Post-translationally, N-glycosylated. In terms of tissue distribution, ubiquitous. Detected in heart, brain, placenta, lung, liver, skeletal muscle, kidney and pancreas.

The protein localises to the golgi apparatus membrane. It carries out the reaction L-tyrosyl-[protein] + 3'-phosphoadenylyl sulfate = O-sulfo-L-tyrosine-[protein] + adenosine 3',5'-bisphosphate + H(+). In terms of biological role, catalyzes the O-sulfation of tyrosine residues within acidic motifs of polypeptides, using 3'-phosphoadenylyl sulfate (PAPS) as cosubstrate. This chain is Protein-tyrosine sulfotransferase 1 (TPST1), found in Homo sapiens (Human).